The chain runs to 76 residues: UPF0346 protein LBA0976 (76 aa).

Belongs to the UPF0346 family.

This is UPF0346 protein LBA0976 from Lactobacillus acidophilus (strain ATCC 700396 / NCK56 / N2 / NCFM).